The following is a 65-amino-acid chain: Protein C' (65 aa).

The protein belongs to the rhabdoviruses C protein family.

In terms of biological role, seems to stimulates transcription by the viral polymerase. May play a role in viral pathogenesis or transmission by insects vectors. In Aedes (Bovine), this protein is Protein C' (P).